We begin with the raw amino-acid sequence, 269 residues long: Hydroxypyruvate/pyruvate aldolase (269 aa).

Catalysis depends on His47, which acts as the Proton acceptor. 2 residues coordinate a divalent metal cation: Glu151 and Asp177.

It belongs to the HpcH/HpaI aldolase family. The cofactor is a divalent metal cation.

It catalyses the reaction D-glyceraldehyde + 3-hydroxypyruvate = 2-dehydro-D-gluconate. The enzyme catalyses D-glyceraldehyde + 3-hydroxypyruvate = (3R,4S,5R)-3,4,5,6-tetrahydroxy-2-oxohexanoate. The catalysed reaction is D-glyceraldehyde + 3-hydroxypyruvate = 2-dehydro-D-galactonate. It carries out the reaction D-glyceraldehyde + pyruvate = 2-dehydro-3-deoxy-L-galactonate. It catalyses the reaction 2-dehydro-3-deoxy-D-gluconate = D-glyceraldehyde + pyruvate. Its function is as follows. Aldolase which can catalyze in vitro the aldolisation reaction between hydroxypyruvate (HPA) or pyruvate (PA) and D-glyceraldehyde (D-GA). The condensation of hydroxypyruvate and D-glyceraldehyde produces 2-dehydro-D-gluconate as the major product, (3R,4S,5R)-3,4,5,6-tetrahydroxy-2-oxohexanoate and 2-dehydro-D-galactonate. The condensation of pyruvate and D-glyceraldehyde produces 2-dehydro-3-deoxy-L-galactonate as the major product and 2-dehydro-3-deoxy-D-gluconate. This Cupriavidus necator (strain ATCC 17699 / DSM 428 / KCTC 22496 / NCIMB 10442 / H16 / Stanier 337) (Ralstonia eutropha) protein is Hydroxypyruvate/pyruvate aldolase.